A 267-amino-acid polypeptide reads, in one-letter code: Glutamate racemase (267 aa).

Substrate is bound by residues 13–14 and 45–46; these read DS and YS. Residue Cys77 is the Proton donor/acceptor of the active site. 78–79 provides a ligand contact to substrate; the sequence is NT. Cys188 (proton donor/acceptor) is an active-site residue. Substrate is bound at residue 189 to 190; sequence TH.

Belongs to the aspartate/glutamate racemases family.

It catalyses the reaction L-glutamate = D-glutamate. Its pathway is cell wall biogenesis; peptidoglycan biosynthesis. Functionally, provides the (R)-glutamate required for cell wall biosynthesis. The sequence is that of Glutamate racemase from Histophilus somni (strain 2336) (Haemophilus somnus).